The sequence spans 619 residues: MDYKQRIEKFKDILNSEEPISLPGLCSLCIQGIPDEYSLRAKAWMLMLEFLPTDRSNWQSVLEKHRKTYTSFVQELLIDPWRKLTLHEESGENSDHPLNTSDDSKWKEYFDDNQILEQIDKDIRRTLPDLSFFQGKSEINKKPSVNNVSENISVNTEDDKVEEVGQKLNYTKITSIDQSQETPVHLSTIDFSKFQEECHLVLQGRIYRLENESTSSSTTALSTPRQSMDSKRTINAEAIAGENKLGLHREAAERILFIYAKLNPGIGYVQGMNEILAPLYYVLATDPTYENYYLCECDAFFLFTQMMVQVRDLYEKTLDHDSDHGIHFLMSKFTERLKKYDYELWENLEEKQIHPTYYSFRWFTCLLSQEFPLPDVIRLWDSIIADQMKARLFGKNDDGFNGAYDFLMDFCCSILIELRESILERNFADSIKLLQAHFNVDMPKLLNLTFELQHLRKTSKNDEDMSYVRKNSYNTNALANSLKNRVLSTYNTVKANVPQSSSSYTDNNKQKEPLEEKRSFFPSFRSSLDGVSPTQGRKSGEENIRTIFAKPTAHIGENGWSNLKVKGSSIFQRFGNFVGDTMRYITEEEESSEEEDLTTSRRKIGITSKRKVSVKRNVI.

The region spanning 34–387 is the Rab-GAP TBC domain; it reads PDEYSLRAKA…RLWDSIIADQ (354 aa).

It localises to the cytoplasm. Its function is as follows. May act as a GTPase-activating protein for Rab family protein(s). This is TBC domain-containing protein C1952.17c from Schizosaccharomyces pombe (strain 972 / ATCC 24843) (Fission yeast).